The chain runs to 162 residues: SsrA-binding protein (162 aa).

The protein belongs to the SmpB family.

The protein localises to the cytoplasm. Its function is as follows. Required for rescue of stalled ribosomes mediated by trans-translation. Binds to transfer-messenger RNA (tmRNA), required for stable association of tmRNA with ribosomes. tmRNA and SmpB together mimic tRNA shape, replacing the anticodon stem-loop with SmpB. tmRNA is encoded by the ssrA gene; the 2 termini fold to resemble tRNA(Ala) and it encodes a 'tag peptide', a short internal open reading frame. During trans-translation Ala-aminoacylated tmRNA acts like a tRNA, entering the A-site of stalled ribosomes, displacing the stalled mRNA. The ribosome then switches to translate the ORF on the tmRNA; the nascent peptide is terminated with the 'tag peptide' encoded by the tmRNA and targeted for degradation. The ribosome is freed to recommence translation, which seems to be the essential function of trans-translation. In Granulibacter bethesdensis (strain ATCC BAA-1260 / CGDNIH1), this protein is SsrA-binding protein.